The primary structure comprises 150 residues: Small ribosomal subunit protein uS9 (150 aa).

Belongs to the universal ribosomal protein uS9 family.

In Mycolicibacterium smegmatis (strain ATCC 700084 / mc(2)155) (Mycobacterium smegmatis), this protein is Small ribosomal subunit protein uS9.